We begin with the raw amino-acid sequence, 373 residues long: ATP phosphoribosyltransferase regulatory subunit (373 aa).

The protein belongs to the class-II aminoacyl-tRNA synthetase family. HisZ subfamily. In terms of assembly, heteromultimer composed of HisG and HisZ subunits.

The protein resides in the cytoplasm. It participates in amino-acid biosynthesis; L-histidine biosynthesis; L-histidine from 5-phospho-alpha-D-ribose 1-diphosphate: step 1/9. Required for the first step of histidine biosynthesis. May allow the feedback regulation of ATP phosphoribosyltransferase activity by histidine. This Rhizobium etli (strain CIAT 652) protein is ATP phosphoribosyltransferase regulatory subunit.